Consider the following 142-residue polypeptide: Hemoglobin subunit alpha-A (142 aa).

In terms of domain architecture, Globin spans 2–142 (VLSAADKTNV…VGAVLTAKYR (141 aa)). Histidine 59 serves as a coordination point for O2. Position 88 (histidine 88) interacts with heme b.

Belongs to the globin family. In terms of assembly, heterotetramer of two alpha chains and two beta chains. Red blood cells.

Involved in oxygen transport from the lung to the various peripheral tissues. This is Hemoglobin subunit alpha-A (HBAA) from Anas platyrhynchos (Mallard).